Reading from the N-terminus, the 495-residue chain is Fibronectin type III and SPRY domain-containing protein 1 (495 aa).

Residues 4 to 99 (QKESLRKIIT…ALESSEELLE (96 aa)) are a coiled coil. The COS domain maps to 105 to 162 (LCSSENDSFTQAAKDIKDSVTMAPAFRLSLKAKASDSMNHMMVDFTHERNLLQSITFL). One can recognise a Fibronectin type-III domain in the interval 164-268 (VPATPEIHVA…EPVTLETHAF (105 aa)). Residues 281–476 (LKVEDLSVEW…VQTGLQVPSI (196 aa)) enclose the B30.2/SPRY domain. Residues 306-332 (KNRTNSPMHSPARTAMMSPKRAPSARV) form a disordered region. S490 is subject to Phosphoserine.

As to quaternary structure, oligomerization is required for binding to microtubules.

It is found in the cytoplasm. The protein resides in the cytoskeleton. It localises to the microtubule organizing center. The protein localises to the centrosome. Its subcellular location is the nucleus. It is found in the cleavage furrow. Functionally, may be involved in microtubule organization and stabilization. In Danio rerio (Zebrafish), this protein is Fibronectin type III and SPRY domain-containing protein 1 (fsd1).